Reading from the N-terminus, the 180-residue chain is MSGLTIFSDEQPEQPLWQSRDAEEIQQQLTAIGVRFERWQADRELGENPQPDAVIAAYQHEIDRLVAEKGYQSWDVISMRPDNEQREVLREKFLSEHTHGEDEVRFFVEGAGLFCLHLNSKIYQILCEKNDLLSVPADTPHWFDMGSKPNFTAIRVFDNPEGWVARFTGDKIADSYPRLD.

His97, His99, Glu103, and His141 together coordinate Fe(2+). Ni(2+) is bound by residues His97, His99, Glu103, and His141.

The protein belongs to the acireductone dioxygenase (ARD) family. In terms of assembly, monomer. The cofactor is Fe(2+). Ni(2+) serves as cofactor.

It catalyses the reaction 1,2-dihydroxy-5-(methylsulfanyl)pent-1-en-3-one + O2 = 3-(methylsulfanyl)propanoate + CO + formate + 2 H(+). The catalysed reaction is 1,2-dihydroxy-5-(methylsulfanyl)pent-1-en-3-one + O2 = 4-methylsulfanyl-2-oxobutanoate + formate + 2 H(+). It participates in amino-acid biosynthesis; L-methionine biosynthesis via salvage pathway; L-methionine from S-methyl-5-thio-alpha-D-ribose 1-phosphate: step 5/6. Catalyzes 2 different reactions between oxygen and the acireductone 1,2-dihydroxy-3-keto-5-methylthiopentene (DHK-MTPene) depending upon the metal bound in the active site. Fe-containing acireductone dioxygenase (Fe-ARD) produces formate and 2-keto-4-methylthiobutyrate (KMTB), the alpha-ketoacid precursor of methionine in the methionine recycle pathway. Ni-containing acireductone dioxygenase (Ni-ARD) produces methylthiopropionate, carbon monoxide and formate, and does not lie on the methionine recycle pathway. The polypeptide is Acireductone dioxygenase (Yersinia enterocolitica serotype O:8 / biotype 1B (strain NCTC 13174 / 8081)).